We begin with the raw amino-acid sequence, 116 residues long: Large ribosomal subunit protein bL19 (116 aa).

It belongs to the bacterial ribosomal protein bL19 family.

This protein is located at the 30S-50S ribosomal subunit interface and may play a role in the structure and function of the aminoacyl-tRNA binding site. The sequence is that of Large ribosomal subunit protein bL19 from Clostridium novyi (strain NT).